Reading from the N-terminus, the 618-residue chain is uncharacterized protein (618 aa).

Disordered stretches follow at residues 70 to 118 (SSEY…SLPR), 330 to 352 (LTARTEEEPERHVPEQAVPEVPC), 456 to 552 (TLPV…PILT), and 587 to 618 (IPSDAESDCLDPPEQDKCEFYTSDPSHSLKTL). Basic and acidic residues-rich tracts occupy residues 74–84 (KGTRRDSRGYE) and 333–343 (RTEEEPERHVP). Low complexity predominate over residues 463-481 (TSRPQSPSSLSSKTTGLPL). 2 stretches are compositionally biased toward polar residues: residues 485–516 (KPTSLMTDRTSPSNSSSRAQTPSRPITPNSLM) and 609–618 (SDPSHSLKTL).

This is an uncharacterized protein from Danio rerio (Zebrafish).